The following is a 231-amino-acid chain: Tol-Pal system protein TolQ (231 aa).

The next 3 helical transmembrane spans lie at 20–40 (IVVQ…WIMI), 134–154 (FLAT…VWGI), and 176–196 (IAEA…AVIA).

This sequence belongs to the ExbB/TolQ family. The Tol-Pal system is composed of five core proteins: the inner membrane proteins TolA, TolQ and TolR, the periplasmic protein TolB and the outer membrane protein Pal. They form a network linking the inner and outer membranes and the peptidoglycan layer.

The protein resides in the cell inner membrane. In terms of biological role, part of the Tol-Pal system, which plays a role in outer membrane invagination during cell division and is important for maintaining outer membrane integrity. The chain is Tol-Pal system protein TolQ from Pseudomonas aeruginosa (strain ATCC 15692 / DSM 22644 / CIP 104116 / JCM 14847 / LMG 12228 / 1C / PRS 101 / PAO1).